Reading from the N-terminus, the 228-residue chain is RNA chaperone ProQ (228 aa).

Residues 107–178 are disordered; sequence KARVQAQRAE…REEKHTPVSD (72 aa). Composition is skewed to basic and acidic residues over residues 117–136 and 146–175; these read QQAK…DAPR and RRKE…KHTP.

Belongs to the ProQ family.

The protein resides in the cytoplasm. In terms of biological role, RNA chaperone with significant RNA binding, RNA strand exchange and RNA duplexing activities. May regulate ProP activity through an RNA-based, post-transcriptional mechanism. This Salmonella agona (strain SL483) protein is RNA chaperone ProQ.